Reading from the N-terminus, the 508-residue chain is RanBP-type and C3HC4-type zinc finger-containing protein 1 (508 aa).

Met1 carries the post-translational modification N-acetylmethionine. Positions Met1 to Arg218 are interaction with IRF3. The tract at residues Met1–Gln268 is interaction with TAB2. Ser50 carries the post-translational modification Phosphoserine. The Ubiquitin-like domain occupies Ile55–Ile119. The segment at Val69–Leu131 is interaction with RNF31. The interval Thr161–Pro191 is disordered. A RanBP2-type zinc finger spans residues Pro188–Glu220. Positions Asp231–Tyr260 form a coiled coil. The TRIAD supradomain stretch occupies residues Glu276 to Cys504. Positions 280, 283, 298, 300, 303, 306, and 321 each coordinate Zn(2+). The RING-type 1 zinc-finger motif lies at Cys280–Cys330. Position 328 is a phosphotyrosine (Tyr328). Cys330, Cys369, Cys374, Cys389, Cys392, Cys397, Cys400, His404, Cys409, Cys445, and Cys448 together coordinate Zn(2+). The segment at Gln349–Cys409 adopts an IBR-type zinc-finger fold. The RING-type 2; atypical zinc-finger motif lies at Cys445–Thr474. Residue Cys458 is part of the active site. The Zn(2+) site is built by Cys463 and Cys466.

This sequence belongs to the RBR family. Component of the LUBAC complex (linear ubiquitin chain assembly complex) which consists of SHARPIN, RBCK1 and RNF31. LUBAC has a MW of approximately 600 kDa suggesting a heteromultimeric assembly of its subunits. Interacts with beta-I-type (PRKCB1) and zeta-type protein kinase C (PRKCZ). Interacts with UBE2L3. Interacts with IREB2 only in iron-rich conditions. Associates with the TNF-R1 signaling complex (TNF-RSC) in a stimulation-dependent manner. Interacts with EYA1, TAB2, TAB3, MAP3K7 TRAF6 and RIPK1. Interacts with IRF3. Auto-ubiquitinated. Auto-ubiquitination leads to degradation by the proteasome. Post-translationally, phosphorylated. In vitro, phosphorylation inhibits auto-ubiquitination activity. Widely expressed.

The catalysed reaction is [E2 ubiquitin-conjugating enzyme]-S-ubiquitinyl-L-cysteine + [acceptor protein]-L-lysine = [E2 ubiquitin-conjugating enzyme]-L-cysteine + [acceptor protein]-N(6)-ubiquitinyl-L-lysine.. It functions in the pathway protein modification; protein ubiquitination. Its function is as follows. E3 ubiquitin-protein ligase, which accepts ubiquitin from specific E2 ubiquitin-conjugating enzymes, such as UBE2L3/UBCM4, and then transfers it to substrates. Functions as an E3 ligase for oxidized IREB2 and both heme and oxygen are necessary for IREB2 ubiquitination. Promotes ubiquitination of TAB2 and IRF3 and their degradation by the proteasome. Component of the LUBAC complex which conjugates linear ('Met-1'-linked) polyubiquitin chains to substrates and plays a key role in NF-kappa-B activation and regulation of inflammation. LUBAC conjugates linear polyubiquitin to IKBKG and RIPK1 and is involved in activation of the canonical NF-kappa-B and the JNK signaling pathways. Linear ubiquitination mediated by the LUBAC complex interferes with TNF-induced cell death and thereby prevents inflammation. LUBAC is recruited to the TNF-R1 signaling complex (TNF-RSC) following polyubiquitination of TNF-RSC components by BIRC2 and/or BIRC3 and to conjugate linear polyubiquitin to IKBKG and possibly other components contributing to the stability of the complex. The LUBAC complex is also involved in innate immunity by conjugating linear polyubiquitin chains at the surface of bacteria invading the cytosol to form the ubiquitin coat surrounding bacteria. LUBAC is not able to initiate formation of the bacterial ubiquitin coat, and can only promote formation of linear polyubiquitins on pre-existing ubiquitin. The bacterial ubiquitin coat acts as an 'eat-me' signal for xenophagy and promotes NF-kappa-B activation. Together with OTULIN, the LUBAC complex regulates the canonical Wnt signaling during angiogenesis. Binds polyubiquitin of different linkage types. This Rattus norvegicus (Rat) protein is RanBP-type and C3HC4-type zinc finger-containing protein 1 (Rbck1).